We begin with the raw amino-acid sequence, 2291 residues long: Protein Ycf2 A (2291 aa).

1642–1649 (GSIGTGRS) contributes to the ATP binding site.

This sequence belongs to the Ycf2 family.

Its subcellular location is the plastid. The protein resides in the chloroplast stroma. Functionally, probable ATPase of unknown function. Its presence in a non-photosynthetic plant (Epifagus virginiana) and experiments in tobacco indicate that it has an essential function which is probably not related to photosynthesis. This chain is Protein Ycf2 A (ycf2-A), found in Atropa belladonna (Belladonna).